Consider the following 351-residue polypeptide: Ubiquinol oxidase 4, chloroplastic/chromoplastic (351 aa).

A chloroplast and chromoplast-targeting transit peptide spans 1–56 (MAAISGISSGTLTISRPLVTLRRSRAAVSYSSSHRLLHHLPLSSRRLLLRNNHRVQ). The interval 71–91 (ESFKAETSTGTEPLEEPNMSS) is disordered. The chain crosses the membrane as a helical span at residues 132-152 (FFVLETIARVPYFAFMSVLHM). Fe cation contacts are provided by glutamate 136, glutamate 175, and histidine 178. Residues 195 to 215 (FLAQHIATFYYFMTVFLYILS) traverse the membrane as a helical segment. Positions 227, 296, and 299 each coordinate Fe cation.

The protein belongs to the alternative oxidase family. The cofactor is Fe cation. Ubiquitous.

Its subcellular location is the plastid. The protein localises to the chloroplast thylakoid membrane. The protein resides in the chromoplast membrane. It carries out the reaction 2 a ubiquinol + O2 = 2 a ubiquinone + 2 H2O. Functionally, acts early in chloroplast biogenesis as a component of a redox chain responsible for phytoene desaturation. Prevents the generation of toxic oxygen radicals and photooxidation of the nascent photosynthetic apparatus. Involved in the differentiation of multiple plastid types, including chloroplasts, amyloplasts, and etioplasts. Might participate in the chloroplast respiratory chain. In Arabidopsis thaliana (Mouse-ear cress), this protein is Ubiquinol oxidase 4, chloroplastic/chromoplastic (AOX4).